We begin with the raw amino-acid sequence, 67 residues long: Conotoxin TsMMSK-B021 (67 aa).

The N-terminal stretch at 1–20 is a signal peptide; the sequence is MMSKLGVLLTICLLLFPLTA. A propeptide spanning residues 21–50 is cleaved from the precursor; that stretch reads VQLDGDQPADLPELRAQDFAPERSPWFDPV. Intrachain disulfides connect Cys-53/Cys-65, Cys-54/Cys-61, and Cys-58/Cys-64. Residue Pro-63 is modified to 4-hydroxyproline.

It belongs to the conotoxin M superfamily. As to expression, expressed by the venom duct.

The protein localises to the secreted. The chain is Conotoxin TsMMSK-B021 from Conus tessulatus (Tessellate cone).